We begin with the raw amino-acid sequence, 606 residues long: NADH-ubiquinone oxidoreductase chain 5 (606 aa).

Helical transmembrane passes span 3–23, 38–58, 87–107, 124–144, 180–200, 216–236, 244–264, 276–296, 304–323, 328–350, 369–389, 404–424, 460–480, 483–503, and 586–606; these read VINLIPTLMLTSLIILTLPII, ITKTAVTYAFAISLIPTLLFI, FFSLTFMPIALFITWSIMEFS, LLLFLITMLILVSANNLLQLF, IGDMGFIMMMAWFTIHLNSWE, LLGLLLASAGKSAQFGLHPWL, TPVSALLHSSTMVMAGVFTLI, IQTSTLCLGAITTLFTAICAL, IIALSTSSQLGLMMVTIGIN, AFIHMCTHAFFKAMLFLSSGSII, MPITSTAIIIGSLALTGMPFL, MSYINTWALLITLIAVSMTAS, LILGSIFMGFLISMNTIPHTT, MTMPPHLKFMALAVTLLGFTV, and LMKLYFLSFLLSITLGLLIAL.

It belongs to the complex I subunit 5 family. In terms of assembly, core subunit of respiratory chain NADH dehydrogenase (Complex I) which is composed of 45 different subunits.

It localises to the mitochondrion inner membrane. It carries out the reaction a ubiquinone + NADH + 5 H(+)(in) = a ubiquinol + NAD(+) + 4 H(+)(out). Functionally, core subunit of the mitochondrial membrane respiratory chain NADH dehydrogenase (Complex I) which catalyzes electron transfer from NADH through the respiratory chain, using ubiquinone as an electron acceptor. Essential for the catalytic activity and assembly of complex I. This chain is NADH-ubiquinone oxidoreductase chain 5 (MT-ND5), found in Loxodonta africana (African elephant).